A 528-amino-acid polypeptide reads, in one-letter code: Peptide chain release factor 3 (528 aa).

A tr-type G domain is found at 11-279; it reads SDRRTFAIIS…GFVEWAPAPI (269 aa). GTP contacts are provided by residues 20–27, 88–92, and 142–145; these read SHPDAGKT, DTPGH, and NKMD.

Belongs to the TRAFAC class translation factor GTPase superfamily. Classic translation factor GTPase family. PrfC subfamily.

It localises to the cytoplasm. In terms of biological role, increases the formation of ribosomal termination complexes and stimulates activities of RF-1 and RF-2. It binds guanine nucleotides and has strong preference for UGA stop codons. It may interact directly with the ribosome. The stimulation of RF-1 and RF-2 is significantly reduced by GTP and GDP, but not by GMP. This chain is Peptide chain release factor 3, found in Marinomonas sp. (strain MWYL1).